Consider the following 542-residue polypeptide: Sodium/hydrogen exchanger 8 (542 aa).

11 consecutive transmembrane segments (helical) span residues 55–75 (EQSS…CIIL), 79–99 (LIRY…LGIL), 118–138 (EEMF…IFES), 151–171 (IGSI…VVGG), 186–206 (NMTD…VATI), 256–276 (TFLQ…ALGT), 306–326 (AYLP…VFAF), 349–369 (LVLF…NFFR), 374–394 (TPKM…PYAL), 412–432 (TTIV…MPLI), and 446–466 (NKKD…ESEH). At T471 the chain carries Phosphothreonine. 2 positions are modified to phosphoserine: S532 and S534.

This sequence belongs to the monovalent cation:proton antiporter 1 (CPA1) transporter (TC 2.A.36) family.

It localises to the golgi apparatus membrane. It is found in the golgi apparatus. Its subcellular location is the trans-Golgi network membrane. The protein localises to the endosome. The protein resides in the multivesicular body membrane. It localises to the apical cell membrane. It is found in the cytoplasmic vesicle. Its subcellular location is the secretory vesicle. The protein localises to the acrosome. The enzyme catalyses Na(+)(in) + H(+)(out) = Na(+)(out) + H(+)(in). Na(+)/H(+) antiporter. Mediates the electoneutral exchange of intracellular H(+) ions for extracellular Na(+) in 1:1 stoichiometry. Acts as an Na(+)/H(+) exchanger in the trans-Golgi. Contributes to the regulation of pH regulation of Golgi apparatus, and consequently, in protein trafficking and endosomal morphology. In germ cells, plays a crucial role in acrosome biogenesis and sperm development, probably by playing a role in the fusion of the Golgi-derived vesicles that form the acrosomal cap. Can also be active at the cell surface of specialized cells. In the small intestine, at the cell membrane, plays a major physiological role in transepithelial absorption of Na(+) and regulates intracellular pH homeostasis of intestinal epithelial cells. Acts as an important regulator of mucosal integrity in the intestine and in the stomach, could mediate the pH fluctuation necessary for mucin exocytosis or assist membrane trafficking of other proteins. Plays a role in photoreceptor survival and in the maintenance of intracellular pH homeostasis in retinal pigment epithelium (RPE cells). The polypeptide is Sodium/hydrogen exchanger 8 (SLC9A8) (Macaca fascicularis (Crab-eating macaque)).